Consider the following 349-residue polypeptide: tRNA-specific 2-thiouridylase MnmA (349 aa).

Residues Gly-7 to Ser-14 and Leu-33 each bind ATP. Cys-94 acts as the Nucleophile in catalysis. Cys-94 and Cys-193 are disulfide-bonded. Gly-119 contributes to the ATP binding site. The segment at Lys-143–Gln-145 is interaction with tRNA. Catalysis depends on Cys-193, which acts as the Cysteine persulfide intermediate. An interaction with tRNA region spans residues Arg-298–Tyr-299.

It belongs to the MnmA/TRMU family.

The protein resides in the cytoplasm. It carries out the reaction S-sulfanyl-L-cysteinyl-[protein] + uridine(34) in tRNA + AH2 + ATP = 2-thiouridine(34) in tRNA + L-cysteinyl-[protein] + A + AMP + diphosphate + H(+). In terms of biological role, catalyzes the 2-thiolation of uridine at the wobble position (U34) of tRNA, leading to the formation of s(2)U34. The chain is tRNA-specific 2-thiouridylase MnmA from Rippkaea orientalis (strain PCC 8801 / RF-1) (Cyanothece sp. (strain PCC 8801)).